We begin with the raw amino-acid sequence, 1319 residues long: Protein Jumonji (1319 aa).

Basic residues predominate over residues 1-11; that stretch reads MSKERPKRNII. Disordered stretches follow at residues 1–23, 50–130, 173–265, 351–382, 396–478, 499–537, and 549–599; these read MSKE…GMPW, DGID…PSLP, DEED…NTNG, YSNN…QSIN, HKMT…KALN, PIQK…PKRA, and QQRA…RSRA. Positions 61 to 70 are enriched in polar residues; sequence ASLSNGQLNG. Residues 74 to 88 show a composition bias toward basic and acidic residues; it reads GHKEDGSRSQRKDGG. The short motif at 96–102 is the Nuclear localization signal element; that stretch reads PAKKRPR. A compositionally biased stretch (basic residues) spans 98-107; sequence KKRPRLHAQR. Residues 109-121 show a composition bias toward polar residues; it reads FAQSQPNSPSNTP. Acidic residues predominate over residues 173–185; sequence DEEDLEDEDEIEE. Over residues 191 to 200 the composition is skewed to polar residues; sequence VASTSCQSTP. Residues 221-251 are compositionally biased toward basic and acidic residues; the sequence is KDKELTPRSKARESSVGRDRSERCDESEISH. A compositionally biased stretch (polar residues) spans 372–382; it reads LSHSGKAQSIN. The segment covering 413–424 has biased composition (basic and acidic residues); that stretch reads SAREEEVVDRPV. Positions 505–515 are enriched in pro residues; it reads PAPPPSPPAAP. Low complexity-rich tracts occupy residues 516-525 and 554-570; these read ASPSMPQNPA and TNPT…ASKS. The segment covering 583–598 has biased composition (basic and acidic residues); the sequence is RLDRDRERERERERSR. The JmjN domain maps to 607-648; sequence VPIFKPSSREFQDPLVYLDSFREQVESCGLCRVLPPTDWRPE. The ARID domain occupies 671-779; sequence WGPNVQKLAC…FLLSYDLLSP (109 aa). Over residues 798-811 the composition is skewed to basic and acidic residues; it reads RKRGPLEGHSDNGH. Positions 798–818 are disordered; that stretch reads RKRGPLEGHSDNGHHSLALPR. Positions 944-948 match the GSGFP motif motif; the sequence is GSGFP. Positions 954–1118 constitute a JmjC domain; it reads PFSKHGWNLT…LGYEAAKDLK (165 aa).

The protein belongs to the JARID2 family. In terms of assembly, associates with the PRC2 complex.

The protein resides in the nucleus. Functionally, regulator of histone methyltransferase complexes that plays an essential role in embryonic development. Acts by modulating histone methyltransferase activity and promoting the recruitment of histone methyltransferase complexes to their target genes. Binds DNA and mediates the recruitment of the PRC2 complex to target genes in embryonic stem cells. Does not have histone demethylase activity but regulates activity of various histone methyltransferase complexes. In embryonic stem cells, it associates with the PRC2 complex and inhibits trimethylation of 'Lys-27' of histone H3 (H3K27me3) by the PRC2 complex, thereby playing a key role in differentiation of embryonic stem cells and normal development. The sequence is that of Protein Jumonji (jarid2b) from Danio rerio (Zebrafish).